The following is a 207-amino-acid chain: Thiamine-phosphate synthase (207 aa).

4-amino-2-methyl-5-(diphosphooxymethyl)pyrimidine is bound by residues 36–40 (QLRMK) and asparagine 68. Mg(2+) is bound by residues aspartate 69 and aspartate 88. Serine 106 lines the 4-amino-2-methyl-5-(diphosphooxymethyl)pyrimidine pocket. 132–134 (TNT) is a 2-[(2R,5Z)-2-carboxy-4-methylthiazol-5(2H)-ylidene]ethyl phosphate binding site. Lysine 135 provides a ligand contact to 4-amino-2-methyl-5-(diphosphooxymethyl)pyrimidine. 2-[(2R,5Z)-2-carboxy-4-methylthiazol-5(2H)-ylidene]ethyl phosphate-binding positions include glycine 162 and 182 to 183 (VS).

It belongs to the thiamine-phosphate synthase family. Requires Mg(2+) as cofactor.

It catalyses the reaction 2-[(2R,5Z)-2-carboxy-4-methylthiazol-5(2H)-ylidene]ethyl phosphate + 4-amino-2-methyl-5-(diphosphooxymethyl)pyrimidine + 2 H(+) = thiamine phosphate + CO2 + diphosphate. The catalysed reaction is 2-(2-carboxy-4-methylthiazol-5-yl)ethyl phosphate + 4-amino-2-methyl-5-(diphosphooxymethyl)pyrimidine + 2 H(+) = thiamine phosphate + CO2 + diphosphate. It carries out the reaction 4-methyl-5-(2-phosphooxyethyl)-thiazole + 4-amino-2-methyl-5-(diphosphooxymethyl)pyrimidine + H(+) = thiamine phosphate + diphosphate. It functions in the pathway cofactor biosynthesis; thiamine diphosphate biosynthesis; thiamine phosphate from 4-amino-2-methyl-5-diphosphomethylpyrimidine and 4-methyl-5-(2-phosphoethyl)-thiazole: step 1/1. Functionally, condenses 4-methyl-5-(beta-hydroxyethyl)thiazole monophosphate (THZ-P) and 2-methyl-4-amino-5-hydroxymethyl pyrimidine pyrophosphate (HMP-PP) to form thiamine monophosphate (TMP). This is Thiamine-phosphate synthase from Methanococcus maripaludis (strain C7 / ATCC BAA-1331).